A 68-amino-acid polypeptide reads, in one-letter code: Palustrin-1c (68 aa).

The signal sequence occupies residues 1 to 22; sequence MFTMKKSLLLLFFLGTISLSLC. A propeptide spanning residues 23–39 is cleaved from the precursor; that stretch reads EEERGADEEEGDGEKLT. The cysteines at positions 62 and 68 are disulfide-linked.

In terms of tissue distribution, expressed by the skin glands.

Its subcellular location is the secreted. In terms of biological role, antimicrobial peptide. The polypeptide is Palustrin-1c (Odorrana versabilis (Chinese bamboo leaf odorous frog)).